Reading from the N-terminus, the 372-residue chain is Probable O-methyltransferase 2 (372 aa).

Residues Gly216, Asp259, and Lys273 each contribute to the S-adenosyl-L-methionine site. His277 (proton acceptor) is an active-site residue.

Belongs to the class I-like SAM-binding methyltransferase superfamily. Cation-independent O-methyltransferase family. COMT subfamily. As to quaternary structure, homodimer. As to expression, expressed predominantly in root hairs.

Its function is as follows. O-methyltransferase of unknown substrate specificity. Not active on resorcinol, orcinol, guaiacol, eugenol, ferulic acid, p-coumaric acid, catechol, caffeic acid or monomethyl ethers of resorcinol or orcinol. The sequence is that of Probable O-methyltransferase 2 (OMT2) from Sorghum bicolor (Sorghum).